The primary structure comprises 336 residues: Glutamyl endopeptidase (336 aa).

An N-terminal signal peptide occupies residues 1–29 (MKGKFLKVSSLFVATLTTATLVSSPAANA). Residues 30–68 (LSSKAMDNHPQQTQSSKQQTPKIQKGGNLKPLEQREHAN) constitute a propeptide that is removed on maturation. Residues 34 to 61 (AMDNHPQQTQSSKQQTPKIQKGGNLKPL) are disordered. Low complexity predominate over residues 39 to 51 (PQQTQSSKQQTPK). Catalysis depends on charge relay system residues histidine 119, aspartate 161, and serine 237. Residues 283–336 (FANDDQPNNPDNPDNPNNPDNPNNPDEPNNPDNPNNPDNPDNGDTNNSDNPDAA) are disordered. Residues 286 to 336 (DDQPNNPDNPDNPNNPDNPNNPDEPNNPDNPNNPDNPDNGDTNNSDNPDAA) show a composition bias toward low complexity. A run of 11 repeats spans residues 289-291 (PNN), 292-294 (PDN), 295-297 (PDN), 298-300 (PNN), 301-303 (PDN), 304-306 (PNN), 310-312 (PNN), 313-315 (PDN), 316-318 (PNN), 319-321 (PDN), and 322-324 (PDN). Positions 289 to 324 (PNNPDNPDNPNNPDNPNNPDEPNNPDNPNNPDNPDN) are 11 X 3 AA repeats of P-[DN]-N.

This sequence belongs to the peptidase S1B family. Post-translationally, proteolytically cleaved by aureolysin (aur). This cleavage leads to the activation of SspA.

It localises to the secreted. The enzyme catalyses Preferential cleavage: Glu-|-Xaa, Asp-|-Xaa.. In terms of biological role, preferentially cleaves peptide bonds on the carboxyl-terminal side of aspartate and glutamate. Along with other extracellular proteases it is involved in colonization and infection of human tissues. Required for proteolytic maturation of thiol protease SspB and inactivation of SspC, an inhibitor of SspB. It is the most important protease for degradation of fibronectin-binding protein (FnBP) and surface protein A, which are involved in adherence to host cells. May also protect bacteria against host defense mechanism by cleaving the immunoglobulin classes IgG, IgA and IgM. May be involved in the stability of secreted lipases. The protein is Glutamyl endopeptidase (sspA) of Staphylococcus aureus (strain COL).